The primary structure comprises 556 residues: 2-succinyl-5-enolpyruvyl-6-hydroxy-3-cyclohexene-1-carboxylate synthase (556 aa).

The protein belongs to the TPP enzyme family. MenD subfamily. As to quaternary structure, homodimer. Mg(2+) serves as cofactor. The cofactor is Mn(2+). Thiamine diphosphate is required as a cofactor.

It catalyses the reaction isochorismate + 2-oxoglutarate + H(+) = 5-enolpyruvoyl-6-hydroxy-2-succinyl-cyclohex-3-ene-1-carboxylate + CO2. It participates in quinol/quinone metabolism; 1,4-dihydroxy-2-naphthoate biosynthesis; 1,4-dihydroxy-2-naphthoate from chorismate: step 2/7. It functions in the pathway quinol/quinone metabolism; menaquinone biosynthesis. Functionally, catalyzes the thiamine diphosphate-dependent decarboxylation of 2-oxoglutarate and the subsequent addition of the resulting succinic semialdehyde-thiamine pyrophosphate anion to isochorismate to yield 2-succinyl-5-enolpyruvyl-6-hydroxy-3-cyclohexene-1-carboxylate (SEPHCHC). In Escherichia coli O157:H7, this protein is 2-succinyl-5-enolpyruvyl-6-hydroxy-3-cyclohexene-1-carboxylate synthase.